A 354-amino-acid chain; its full sequence is Guanine nucleotide-binding protein G(t) subunit alpha-2 (354 aa).

Residues 1 to 28 (MGSGISAEDKELARRSKELEKKLQEDAD) are disordered. Gly-2 carries N-myristoyl glycine lipidation. Basic and acidic residues predominate over residues 7 to 28 (AEDKELARRSKELEKKLQEDAD). In terms of domain architecture, G-alpha spans 32 to 354 (KTVKLLLLGA…KENLKDCGLF (323 aa)). The tract at residues 35–48 (KLLLLGAGESGKST) is G1 motif. GTP is bound by residues 40–47 (GAGESGKS), 175–181 (LRSRVKT), 200–204 (DVGGQ), 269–272 (NKKD), and Ala-326. Mg(2+) is bound by residues Ser-47 and Thr-181. The tract at residues 173–181 (DVLRSRVKT) is G2 motif. Positions 196–205 (FRMFDVGGQR) are G3 motif. The interval 265-272 (VLFLNKKD) is G4 motif. The G5 motif stretch occupies residues 324-329 (TCATDT).

Belongs to the G-alpha family. G(i/o/t/z) subfamily. As to quaternary structure, g proteins are composed of 3 units; alpha, beta and gamma. The alpha chain contains the guanine nucleotide binding site. In terms of tissue distribution, in the retina, expressed in the rod photoreceptors.

It is found in the cell projection. The protein localises to the cilium. The protein resides in the photoreceptor outer segment. Its subcellular location is the photoreceptor inner segment. Functionally, guanine nucleotide-binding proteins (G proteins) are involved as modulators or transducers in various transmembrane signaling systems. Transducin is an amplifier and one of the transducers of a visual impulse that performs the coupling between rhodopsin and cGMP-phosphodiesterase. This Mus musculus (Mouse) protein is Guanine nucleotide-binding protein G(t) subunit alpha-2 (Gnat2).